Consider the following 438-residue polypeptide: Minor capsid protein p49 (438 aa).

Residues 134-167 (PQVSGLKDTQKNCLTQPSSLPSLKNPKNSSVPST) form a disordered region. Residues 144–167 (KNCLTQPSSLPSLKNPKNSSVPST) show a composition bias toward polar residues.

This sequence belongs to the asfivirus p49 structural protein family.

The protein resides in the virion. In terms of biological role, together with the penton and the other minor capsid proteins (M1249L, p17), forms a complicated network immediately below the outer capsid shell, stabilizing the whole capsid. Plays an essential role in the formation of infectious virus particles. Especially required for the formation of the capsid vertices. During virion assembly, associates with the membrane and probably mediates the docking of the penton complex to the inner membrane, where it recruits the capsomers to form the penton core. This is Minor capsid protein p49 from Ornithodoros (relapsing fever ticks).